A 144-amino-acid polypeptide reads, in one-letter code: Ribosome-binding factor A (144 aa).

Positions 121–144 (KAQTGVEEPLENTAEGEENPSGGE) are disordered. Residues 128–138 (EPLENTAEGEE) are compositionally biased toward acidic residues.

Belongs to the RbfA family. In terms of assembly, monomer. Binds 30S ribosomal subunits, but not 50S ribosomal subunits or 70S ribosomes.

It is found in the cytoplasm. One of several proteins that assist in the late maturation steps of the functional core of the 30S ribosomal subunit. Associates with free 30S ribosomal subunits (but not with 30S subunits that are part of 70S ribosomes or polysomes). Required for efficient processing of 16S rRNA. May interact with the 5'-terminal helix region of 16S rRNA. The protein is Ribosome-binding factor A of Synechococcus sp. (strain JA-2-3B'a(2-13)) (Cyanobacteria bacterium Yellowstone B-Prime).